Here is a 311-residue protein sequence, read N- to C-terminus: 4-hydroxyproline 2-epimerase (311 aa).

Catalysis depends on C89, which acts as the Proton acceptor. Substrate is bound by residues 90-91 (GH), H209, and D233. The active-site Proton donor is C237. Residue 238–239 (GT) coordinates substrate.

The protein belongs to the proline racemase family.

The enzyme catalyses trans-4-hydroxy-L-proline = cis-4-hydroxy-D-proline. Catalyzes the epimerization of trans-4-hydroxy-L-proline (t4LHyp) to cis-4-hydroxy-D-proline (c4DHyp). Is likely involved in a degradation pathway that converts t4LHyp to alpha-ketoglutarate. Displays no proline racemase activity. This Burkholderia ambifaria (strain ATCC BAA-244 / DSM 16087 / CCUG 44356 / LMG 19182 / AMMD) (Burkholderia cepacia (strain AMMD)) protein is 4-hydroxyproline 2-epimerase.